The chain runs to 187 residues: UPF0340 protein SPG_0604 (187 aa).

It belongs to the UPF0340 family.

This is UPF0340 protein SPG_0604 from Streptococcus pneumoniae serotype 19F (strain G54).